We begin with the raw amino-acid sequence, 628 residues long: MDSGSSSSDSAPDCWDQVDMESPGSAPSGDGVSSAVAEAQREPLSSAFSRKLNVNAKPFVPNVHAAEFVPSFLRGPTQPPTLPAGSGSNDETCTGAGYPQGKRMGRGAPVEPSREEPLVSLEGSNSAVTMELSEPVVENGEVEMALEESWEHSKEVSEAEPGGGSSGDSGPPEESGQEMMEEKEEIRKSKSVIVPSGAPKKEHVNVVFIGHVDAGKSTIGGQIMFLTGMVDKRTLEKYEREAKEKNRETWYLSWALDTNQEERDKGKTVEVGRAYFETERKHFTILDAPGHKSFVPNMIGGASQADLAVLVISARKGEFETGFEKGGQTREHAMLAKTAGVKHLIVLINKMDDPTVNWSIERYEECKEKLVPFLKKVGFSPKKDIHFMPCSGLTGANIKEQSDFCPWYTGLPFIPYLDNLPNFNRSIDGPIRLPIVDKYKDMGTVVLGKLESGSIFKGQQLVMMPNKHNVEVLGILSDDTETDFVAPGENLKIRLKGIEEEEILPGFILCDPSNLCHSGRTFDVQIVIIEHKSIICPGYNAVLHIHTCIEEVEITALISLVDKKSGEKSKTRPRFVKQDQVCIARLRTAGTICLETFKDFPQMGRFTLRDEGKTIAIGKVLKLVPEKD.

Over residues 1–10 (MDSGSSSSDS) the composition is skewed to low complexity. Disordered stretches follow at residues 1 to 49 (MDSG…SAFS), 72 to 124 (FLRG…LEGS), and 146 to 195 (LEES…VIVP). One can recognise a tr-type G domain in the interval 201-425 (KEHVNVVFIG…YLDNLPNFNR (225 aa)). Residues 210–217 (GHVDAGKS) are G1. Position 213–218 (213–218 (DAGKST)) interacts with GTP. A G2 region spans residues 266–270 (GKTVE). The segment at 287–290 (DAPG) is G3. Residues 349–352 (NKMD) and 391–393 (SGL) contribute to the GTP site. A G4 region spans residues 349 to 352 (NKMD). Residues 391 to 393 (SGL) form a G5 region.

The protein belongs to the TRAFAC class translation factor GTPase superfamily. Classic translation factor GTPase family. ERF3 subfamily. As to quaternary structure, component of the eRF1-eRF3-GTP ternary complex, composed of ETF1/ERF1 and ERF3 (GSPT1/ERF3A or GSPT2/ERF3B) and GTP. Component of the transient SURF (SMG1-UPF1-eRF1-eRF3) complex. Interacts with UPF1 and PABPC1. Highly expressed in IUCC stage II colorectal cancer (CRC).

Its subcellular location is the cytoplasm. It carries out the reaction GTP + H2O = GDP + phosphate + H(+). Functionally, GTPase component of the eRF1-eRF3-GTP ternary complex, a ternary complex that mediates translation termination in response to the termination codons UAA, UAG and UGA. GSPT2/ERF3B mediates ETF1/ERF1 delivery to stop codons: The eRF1-eRF3-GTP complex binds to a stop codon in the ribosomal A-site. GTP hydrolysis by GSPT2/ERF3B induces a conformational change that leads to its dissociation, permitting ETF1/ERF1 to accommodate fully in the A-site. Component of the transient SURF complex which recruits UPF1 to stalled ribosomes in the context of nonsense-mediated decay (NMD) of mRNAs containing premature stop codons. The protein is Eukaryotic peptide chain release factor GTP-binding subunit ERF3B (GSPT2) of Homo sapiens (Human).